Here is a 76-residue protein sequence, read N- to C-terminus: uncharacterized protein (76 aa).

Helical transmembrane passes span Phe-16 to Leu-33 and Thr-45 to Ala-61.

The protein localises to the cell membrane. This is an uncharacterized protein from Bacillus subtilis (strain 168).